The primary structure comprises 356 residues: Thiamine thiazole synthase, chloroplastic (356 aa).

A chloroplast-targeting transit peptide spans 1-51; the sequence is MAAMASTAFAPSVSSTTNKLFDSSFHGAPMSPSLLRLQPIKSSRPNNLSIS. Residues Ala-101, 121–122, Gly-129, and Ala-194 each bind substrate; that span reads EQ. 2,3-didehydroalanine (Cys) is present on Cys-223. Substrate contacts are provided by residues Asp-225, His-240, Met-292, and 302-304; that span reads RMG.

Belongs to the THI4 family. Homooctamer. The cofactor is Fe cation. Post-translationally, during the catalytic reaction, a sulfide is transferred from Cys-223 to a reaction intermediate, generating a dehydroalanine residue.

Its subcellular location is the plastid. The protein localises to the chloroplast. It carries out the reaction [ADP-thiazole synthase]-L-cysteine + glycine + NAD(+) = [ADP-thiazole synthase]-dehydroalanine + ADP-5-ethyl-4-methylthiazole-2-carboxylate + nicotinamide + 3 H2O + 2 H(+). Involved in biosynthesis of the thiamine precursor thiazole. Catalyzes the conversion of NAD and glycine to adenosine diphosphate 5-(2-hydroxyethyl)-4-methylthiazole-2-carboxylic acid (ADT), an adenylated thiazole intermediate. The reaction includes an iron-dependent sulfide transfer from a conserved cysteine residue of the protein to a thiazole intermediate. The enzyme can only undergo a single turnover, which suggests it is a suicide enzyme. May have additional roles in adaptation to various stress conditions and in DNA damage tolerance. This is Thiamine thiazole synthase, chloroplastic from Citrus sinensis (Sweet orange).